Here is a 546-residue protein sequence, read N- to C-terminus: DDB1- and CUL4-associated factor 11 (546 aa).

A compositionally biased stretch (low complexity) spans 1–19 (MGSRNSSSAGSGSGDPSEG). The segment at 1 to 40 (MGSRNSSSAGSGSGDPSEGLTRRGAGLRRSEEEEEEDEDV) is disordered. Ser75 carries the phosphoserine modification. 7 WD repeats span residues 170–210 (SYSQ…RKFK), 216–258 (DVGW…TALD), 263–302 (ERRF…RTLQ), 305–345 (SHED…EDDP), 353–392 (GHQD…SREG), 435–480 (GVLH…KKLT), and 481–520 (NHKA…YFQD). The interval 523–546 (PESEECASAPAPVPRSSTPFSSPQ) is disordered. Over residues 537-546 (RSSTPFSSPQ) the composition is skewed to polar residues.

Interacts with DDB1 and CUL4A.

The protein operates within protein modification; protein ubiquitination. Its function is as follows. May function as a substrate receptor for CUL4-DDB1 E3 ubiquitin-protein ligase complex. The sequence is that of DDB1- and CUL4-associated factor 11 (DCAF11) from Pongo abelii (Sumatran orangutan).